A 309-amino-acid chain; its full sequence is MKKTLKQEKIAVLLGGTSAEREVSLDSGQAVLNALLSAGFDAHPIDPKTFPVATLKEQGFDRVFNILHGRGGEDGTMQGLLEQIGIPYTGCGVMTSALTMDKMRTKMLWKAFGLPVAEMEIVTKANVGELNPSAVVEKLGLPVMVKPSLEGSSVGLTKVKRVEDLKSAVDFALKYDDTVLIEEWLSGAEFTVPVLDNEVLPSIRIVPEGEFYDYEAKYISDNTQYFCPSGLSAEREDELKQLVKQAYDVVGCRGWSRIDVMLDGNDAFRLVEVNTNPGMTSHSLFPKSAATVGYSFEQLVVKILELSAE.

The 200-residue stretch at K106 to E305 folds into the ATP-grasp domain. V136–T191 contributes to the ATP binding site. The Mg(2+) site is built by D259, E272, and N274.

The protein belongs to the D-alanine--D-alanine ligase family. The cofactor is Mg(2+). Requires Mn(2+) as cofactor.

The protein resides in the cytoplasm. The enzyme catalyses 2 D-alanine + ATP = D-alanyl-D-alanine + ADP + phosphate + H(+). The protein operates within cell wall biogenesis; peptidoglycan biosynthesis. In terms of biological role, cell wall formation. In Pasteurella multocida (strain Pm70), this protein is D-alanine--D-alanine ligase.